The following is a 37-amino-acid chain: Large ribosomal subunit protein bL36 (37 aa).

The protein belongs to the bacterial ribosomal protein bL36 family.

This is Large ribosomal subunit protein bL36 from Prochlorococcus marinus (strain MIT 9313).